Reading from the N-terminus, the 119-residue chain is Large ribosomal subunit protein bL20 (119 aa).

The protein belongs to the bacterial ribosomal protein bL20 family.

Binds directly to 23S ribosomal RNA and is necessary for the in vitro assembly process of the 50S ribosomal subunit. It is not involved in the protein synthesizing functions of that subunit. The sequence is that of Large ribosomal subunit protein bL20 from Acinetobacter baylyi (strain ATCC 33305 / BD413 / ADP1).